The primary structure comprises 215 residues: Small ribosomal subunit protein uS3 (215 aa).

Positions 39–107 constitute a KH type-2 domain; the sequence is VRQYLQKRLA…PVHINIEEIR (69 aa).

The protein belongs to the universal ribosomal protein uS3 family. As to quaternary structure, part of the 30S ribosomal subunit. Forms a tight complex with proteins S10 and S14.

Its function is as follows. Binds the lower part of the 30S subunit head. Binds mRNA in the 70S ribosome, positioning it for translation. The protein is Small ribosomal subunit protein uS3 of Nitrosomonas eutropha (strain DSM 101675 / C91 / Nm57).